The following is a 390-amino-acid chain: GTPase Obg (390 aa).

The 159-residue stretch at 1-159 folds into the Obg domain; sequence MKFIDESLIR…RDLLLELMLL (159 aa). One can recognise an OBG-type G domain in the interval 160 to 333; the sequence is ADVGMLGLPN…LCRDIMDFII (174 aa). Residues 166–173, 191–195, 213–216, 283–286, and 314–316 each bind GTP; these read GLPNAGKS, FTTLV, DIPG, NKID, and SAA. Residues serine 173 and threonine 193 each coordinate Mg(2+). Positions 363–382 are disordered; it reads EHQFDDDEDWDDDWSEEDDE. The segment covering 366–382 has biased composition (acidic residues); sequence FDDDEDWDDDWSEEDDE.

The protein belongs to the TRAFAC class OBG-HflX-like GTPase superfamily. OBG GTPase family. Monomer. Mg(2+) is required as a cofactor.

Its subcellular location is the cytoplasm. An essential GTPase which binds GTP, GDP and possibly (p)ppGpp with moderate affinity, with high nucleotide exchange rates and a fairly low GTP hydrolysis rate. Plays a role in control of the cell cycle, stress response, ribosome biogenesis and in those bacteria that undergo differentiation, in morphogenesis control. This chain is GTPase Obg, found in Haemophilus influenzae (strain ATCC 51907 / DSM 11121 / KW20 / Rd).